The following is a 263-amino-acid chain: uncharacterized protein (263 aa).

It belongs to the flavoredoxin family. Requires FMN as cofactor.

This is an uncharacterized protein from Aeropyrum pernix (strain ATCC 700893 / DSM 11879 / JCM 9820 / NBRC 100138 / K1).